The chain runs to 331 residues: MNLKNRHFLKLLDFTPEEITAYLDLAAELKAAKKAGREIQRMKGKNIALIFEKTSTRTRCAFEVAARDQGAGVTYLEPSASQIGHKESIKDTARVLGRMYDAIEYRGFGQETVEELAKYAGVPVFNGLTNEFHPTQMLADALTMREHSGKPLNQTAFAYVGDARYNMGNSLLILGAKLGMDVRIGAPQSLWPSEGIIAAAHAAAKETGAKITLTENAHEAVKNVDFIHTDVWVSMGEPKEVWQERIDLLKDYRVTPELMAASGNPQVKFMHCLPAFHNRETKVGEWIYETFGLNGVEVTEEVFESPASIVFDQAENRMHTIKAVMVAALGD.

Residues 55-58, Gln82, Arg106, and 133-136 each bind carbamoyl phosphate; these read STRT and HPTQ. L-ornithine contacts are provided by residues Asn166, Asp230, and 234–235; that span reads SM. Residues 272–273 and Arg317 contribute to the carbamoyl phosphate site; that span reads CL.

The protein belongs to the aspartate/ornithine carbamoyltransferase superfamily. OTCase family.

It is found in the cytoplasm. It catalyses the reaction carbamoyl phosphate + L-ornithine = L-citrulline + phosphate + H(+). It functions in the pathway amino-acid biosynthesis; L-arginine biosynthesis; L-arginine from L-ornithine and carbamoyl phosphate: step 1/3. Functionally, reversibly catalyzes the transfer of the carbamoyl group from carbamoyl phosphate (CP) to the N(epsilon) atom of ornithine (ORN) to produce L-citrulline. This is Ornithine carbamoyltransferase (argF) from Neisseria meningitidis serogroup A / serotype 4A (strain DSM 15465 / Z2491).